The following is a 446-amino-acid chain: Calcium-binding and coiled-coil domain-containing protein 2 (446 aa).

A CLIR motif is present at residues 133–136 (ILVV). The stretch at 137 to 349 (TTQGEVEEIE…RENSRLLSYM (213 aa)) forms a coiled coil. The short motif at 203–206 (DYWE) is the LIR-like element. Residues 371–381 (NPGLVYGNPYS) are interaction with LGALS8. Positions 395–446 (KKCPICKADDICDHILEQQQMQPLCLNCPICDKIFPATEKQIFEDHVFCHSL) are interaction with MYO6. A UBZ1-type zinc finger spans residues 419–444 (CLNCPICDKIFPATEKQIFEDHVFCH). Zn(2+)-binding residues include C422, C425, H440, and H444. A Phosphoserine modification is found at S445.

The protein belongs to the CALCOCO family. In terms of assembly, dimer. Part of a complex consisting of CALCOCO2, TAX1BP1 and MYO6. Interacts with MYO6. Interacts with GEMIN4. Interacts with ATG8 family members MAP1LC3A, MAP1LC3B, GABARAP, GABARAPL1 and GABARAPL2. Interacts with ATG8 family member MAP1LC3C. Interacts with LGALS8. Interacts with TOM1; the interaction is indirect and is mediated by MYO6, which acts as a bridge between TOM1 and CALCOCO2. Interacts with AZI2.

Its subcellular location is the cytoplasm. The protein localises to the perinuclear region. It localises to the cytoskeleton. It is found in the cytoplasmic vesicle. The protein resides in the autophagosome membrane. Functionally, xenophagy-specific receptor required for autophagy-mediated intracellular bacteria degradation. Acts as an effector protein of galectin-sensed membrane damage that restricts the proliferation of infecting pathogens upon entry into the cytosol by targeting LGALS8-associated bacteria for autophagy. Initially orchestrates bacteria targeting to autophagosomes and subsequently ensures pathogen degradation by regulating pathogen-containing autophagosome maturation. Bacteria targeting to autophagosomes relies on its interaction with MAP1LC3A, MAP1LC3B and/or GABARAPL2, whereas regulation of pathogen-containing autophagosome maturation requires the interaction with MAP3LC3C. May play a role in ruffle formation and actin cytoskeleton organization and seems to negatively regulate constitutive secretion. In Pongo abelii (Sumatran orangutan), this protein is Calcium-binding and coiled-coil domain-containing protein 2.